Here is a 136-residue protein sequence, read N- to C-terminus: Putative pre-16S rRNA nuclease (136 aa).

It belongs to the YqgF nuclease family.

It localises to the cytoplasm. Could be a nuclease involved in processing of the 5'-end of pre-16S rRNA. This Francisella tularensis subsp. novicida (strain U112) protein is Putative pre-16S rRNA nuclease.